A 196-amino-acid chain; its full sequence is ATP-dependent Clp protease proteolytic subunit (196 aa).

The Nucleophile role is filled by Ser96. The active site involves His121.

This sequence belongs to the peptidase S14 family. In terms of assembly, fourteen ClpP subunits assemble into 2 heptameric rings which stack back to back to give a disk-like structure with a central cavity, resembling the structure of eukaryotic proteasomes.

It localises to the cytoplasm. The enzyme catalyses Hydrolysis of proteins to small peptides in the presence of ATP and magnesium. alpha-casein is the usual test substrate. In the absence of ATP, only oligopeptides shorter than five residues are hydrolyzed (such as succinyl-Leu-Tyr-|-NHMec, and Leu-Tyr-Leu-|-Tyr-Trp, in which cleavage of the -Tyr-|-Leu- and -Tyr-|-Trp bonds also occurs).. In terms of biological role, cleaves peptides in various proteins in a process that requires ATP hydrolysis. Has a chymotrypsin-like activity. Plays a major role in the degradation of misfolded proteins. This Streptococcus agalactiae serotype III (strain NEM316) protein is ATP-dependent Clp protease proteolytic subunit.